A 336-amino-acid chain; its full sequence is Neuropeptides B/W receptor type 2 (336 aa).

The tract at residues 1–25 (MMEATGLEGLESTSSPCPGSTGTGL) is disordered. Residues 1-45 (MMEATGLEGLESTSSPCPGSTGTGLSWDNGTRHNATFPEPLPALY) are Extracellular-facing. Low complexity predominate over residues 12–25 (STSSPCPGSTGTGL). Residues Asn-29 and Asn-34 are each glycosylated (N-linked (GlcNAc...) asparagine). The helical transmembrane segment at 46–68 (VLLPVVYSVICAVGLVGNAAVIC) threads the bilayer. The Cytoplasmic segment spans residues 69–80 (VILRAPKMKTVT). The chain crosses the membrane as a helical span at residues 81–103 (HVFILNLAIADGLFTLVLPTNIA). The Extracellular segment spans residues 104–127 (EHLLQRWPFGEVLCKLVLAIDHCN). Residues Cys-117 and Cys-197 are joined by a disulfide bond. A helical membrane pass occupies residues 128–146 (IFSSVYFLAAMSIDRYLVV). The Cytoplasmic segment spans residues 147 to 165 (LATARSRRMPRRTVHRAKV). Residues 166–188 (ASLCVWLGVTVAVLPFLTFAGVY) form a helical membrane-spanning segment. The Extracellular portion of the chain corresponds to 189-213 (NNELQVTSCGLSFPRPERAWFQASR). The helical transmembrane segment at 214 to 236 (IYTLVLGFVVPMCTLCVLYADLL) threads the bilayer. Residues 237–256 (RRLRALRLHSGAKALGKAKR) lie on the Cytoplasmic side of the membrane. Residues 257–279 (KVSLLVLAVLAVGLLCWTPFHLA) traverse the membrane as a helical segment. Residues 280-293 (SIVALTTDLPQTPL) are Extracellular-facing. The helical transmembrane segment at 294 to 316 (VIIVSYVVTSLSYTSSCLNPFLY) threads the bilayer. Over 317 to 336 (AFLDHSFRKSLRTACRCQGA) the chain is Cytoplasmic.

It belongs to the G-protein coupled receptor 1 family.

Its subcellular location is the cell membrane. Functionally, interacts specifically with a number of opioid ligands. Receptor for neuropeptides B and W, which may be involved in neuroendocrine system regulation, food intake and the organization of other signals. This is Neuropeptides B/W receptor type 2 (NPBWR2) from Bos taurus (Bovine).